Here is a 315-residue protein sequence, read N- to C-terminus: Glutathione synthetase (315 aa).

In terms of domain architecture, ATP-grasp spans 125–310; that stretch reads KLYTAWFADL…ITGMLMDAIE (186 aa). Position 151 to 207 (151 to 207) interacts with ATP; sequence WEKHGDIIMKPLDGMGGASIFRVKEGDPNIGVIAETLTELGNRYCMAQNYLPAIKDG. Residues glutamate 281 and asparagine 283 each coordinate Mg(2+).

Belongs to the prokaryotic GSH synthase family. It depends on Mg(2+) as a cofactor. Mn(2+) serves as cofactor.

It carries out the reaction gamma-L-glutamyl-L-cysteine + glycine + ATP = glutathione + ADP + phosphate + H(+). It functions in the pathway sulfur metabolism; glutathione biosynthesis; glutathione from L-cysteine and L-glutamate: step 2/2. This Salmonella typhimurium (strain LT2 / SGSC1412 / ATCC 700720) protein is Glutathione synthetase.